We begin with the raw amino-acid sequence, 145 residues long: Large ribosomal subunit protein uL13 (145 aa).

Belongs to the universal ribosomal protein uL13 family. As to quaternary structure, part of the 50S ribosomal subunit.

Functionally, this protein is one of the early assembly proteins of the 50S ribosomal subunit, although it is not seen to bind rRNA by itself. It is important during the early stages of 50S assembly. The protein is Large ribosomal subunit protein uL13 of Macrococcus caseolyticus (strain JCSC5402) (Macrococcoides caseolyticum).